The sequence spans 170 residues: MSTLRIPIALQQAVMQCLRHYLQLANQHLGTAYPEPKINYHQRGTNAGSAYLQSFEIRLNPVLLLENKQPFIDEVVPHELAHLLVYRQFGRVAPHGKEWRWMMEQVLKVPASRTHQFEVASVRSKTFNYQCKCQQHALTIRRHNKVLRGESEYRCRQCGEKLQFITINPD.

A SprT-like domain is found at 22–165 (LQLANQHLGT…RQCGEKLQFI (144 aa)). Position 78 (H78) interacts with Zn(2+). E79 is a catalytic residue. H82 lines the Zn(2+) pocket.

Belongs to the SprT family. Zn(2+) is required as a cofactor.

The protein resides in the cytoplasm. The protein is Protein SprT of Yersinia pseudotuberculosis serotype O:1b (strain IP 31758).